We begin with the raw amino-acid sequence, 488 residues long: Zinc metalloproteinase-disintegrin VMP-II (488 aa).

The first 20 residues, 1 to 20 (MIQVLLVTICLAVFPYQGSS), serve as a signal peptide directing secretion. A propeptide spanning residues 21-191 (IILESGNVND…KASQSNIPPE (171 aa)) is cleaved from the precursor. The 199-residue stretch at 198 to 396 (RYIELVVVAD…STTRCLHNEP (199 aa)) folds into the Peptidase M12B domain. Positions 201 and 285 each coordinate Ca(2+). Asn-296 carries an N-linked (GlcNAc...) asparagine glycan. 3 disulfide bridges follow: Cys-309–Cys-391, Cys-349–Cys-373, and Cys-351–Cys-356. His-334 provides a ligand contact to Zn(2+). Glu-335 is a catalytic residue. The Zn(2+) site is built by His-338 and His-344. Cys-391, Asn-394, Asn-409, Glu-413, Glu-416, and Asp-419 together coordinate Ca(2+). One can recognise a Disintegrin domain in the interval 404 to 488 (PPFCGNYFKE…ADCPRNGLYG (85 aa)). 7 disulfides stabilise this stretch: Cys-407–Cys-426, Cys-418–Cys-436, Cys-420–Cys-431, Cys-430–Cys-453, Cys-444–Cys-450, Cys-449–Cys-474, and Cys-462–Cys-481. Positions 466-468 (RGD) match the Cell attachment site motif.

It belongs to the venom metalloproteinase (M12B) family. P-II subfamily. P-IIb sub-subfamily. As to quaternary structure, homodimer; disulfide-linked (disintegrin). Requires Zn(2+) as cofactor. As to expression, expressed by the venom gland.

It localises to the secreted. In terms of biological role, zinc metalloproteinase-disintegrin VMP-II: inhibits ADP-induced platelet aggregation (probably by binding integrin alpha-IIb/beta-3 (ITGA2B/ITGB3)) and degrades fibrinogen. Functionally, recombinant disintegrin r-Cam-dis (413-488): this recombinant protein inhibits platelet adhesion to fibrinogen (IC(50) is 1 nM), inhibits collagen- (IC(50) is 18 nM) and ADP-induced (IC(50) is 6 nM) platelet aggregation, and also inhibits platelet function on clot retraction. May act by binding integrin alpha-IIb/beta-3 (ITGA2B/ITGB3). The chain is Zinc metalloproteinase-disintegrin VMP-II from Crotalus adamanteus (Eastern diamondback rattlesnake).